We begin with the raw amino-acid sequence, 280 residues long: Para-Rep C2 (280 aa).

The region spanning 1–97 (MARRYCFTLN…ETLISEIGIP (97 aa)) is the CRESS-DNA virus Rep endonuclease domain. Residues 6-9 (CFTL) carry the RCR-1 motif. The a divalent metal cation site is built by Glu-37 and His-45. The short motif at 45–47 (HLQ) is the RCR-2 element. Positions 54–75 (NKIRLGGLKKKFGNRAHWEIAR) match the Nuclear localization signal motif. Tyr-84 functions as the For DNA cleavage activity in the catalytic mechanism. Positions 84–87 (YCCK) match the RCR-3 motif. The Nuclear localization signal motif lies at 97 to 103 (PVMKGSN). 172–180 (GSDGGEGKT) is a binding site for ATP.

This sequence belongs to the nanoviridea/circoviridae replication-associated protein family. Homooligomer (Potential). Rep binds to repeated DNA motifs (iterons). Mg(2+) serves as cofactor. The cofactor is Mn(2+).

Its subcellular location is the host nucleus. The enzyme catalyses ATP + H2O = ADP + phosphate + H(+). Its function is as follows. Initiates and terminates the replication only of its own subviral DNA molecule. The closed circular ssDNA genome is first converted to a superhelical dsDNA. Rep binds a specific hairpin at the genome origin of replication. Introduces an endonucleolytic nick within the intergenic region of the genome, thereby initiating the rolling circle replication (RCR). Following cleavage, binds covalently to the 5'-phosphate of DNA as a tyrosyl ester. The cleavage gives rise to a free 3'-OH that serves as a primer for the cellular DNA polymerase. The polymerase synthesizes the (+) strand DNA by rolling circle mechanism. After one round of replication, a Rep-catalyzed nucleotidyl transfer reaction releases a circular single-stranded virus genome, thereby terminating the replication. Displays origin-specific DNA cleavage, nucleotidyl transferase, ATPase and helicase activities. The polypeptide is Para-Rep C2 (C2) (Subterranean clover stunt C2 alphasatellite (SCSC2A)).